Here is a 478-residue protein sequence, read N- to C-terminus: Bifunctional protein HldE (478 aa).

The interval 1 to 318 (MKVTLPDFRQ…ENAIRGRADT (318 aa)) is ribokinase. Position 195–198 (195–198 (NLSE)) interacts with ATP. Asp-264 is a catalytic residue. The interval 344–478 (MTNGCFDILH…NTIKANASKS (135 aa)) is cytidylyltransferase.

This sequence in the N-terminal section; belongs to the carbohydrate kinase PfkB family. It in the C-terminal section; belongs to the cytidylyltransferase family. Homodimer.

The enzyme catalyses D-glycero-beta-D-manno-heptose 7-phosphate + ATP = D-glycero-beta-D-manno-heptose 1,7-bisphosphate + ADP + H(+). It catalyses the reaction D-glycero-beta-D-manno-heptose 1-phosphate + ATP + H(+) = ADP-D-glycero-beta-D-manno-heptose + diphosphate. It functions in the pathway nucleotide-sugar biosynthesis; ADP-L-glycero-beta-D-manno-heptose biosynthesis; ADP-L-glycero-beta-D-manno-heptose from D-glycero-beta-D-manno-heptose 7-phosphate: step 1/4. The protein operates within nucleotide-sugar biosynthesis; ADP-L-glycero-beta-D-manno-heptose biosynthesis; ADP-L-glycero-beta-D-manno-heptose from D-glycero-beta-D-manno-heptose 7-phosphate: step 3/4. Functionally, catalyzes the phosphorylation of D-glycero-D-manno-heptose 7-phosphate at the C-1 position to selectively form D-glycero-beta-D-manno-heptose-1,7-bisphosphate. In terms of biological role, catalyzes the ADP transfer from ATP to D-glycero-beta-D-manno-heptose 1-phosphate, yielding ADP-D-glycero-beta-D-manno-heptose. This is Bifunctional protein HldE from Pectobacterium carotovorum subsp. carotovorum (strain PC1).